Consider the following 732-residue polypeptide: 1,4-alpha-glucan branching enzyme GlgB 2 (732 aa).

Asp413 acts as the Nucleophile in catalysis. Glu466 functions as the Proton donor in the catalytic mechanism.

This sequence belongs to the glycosyl hydrolase 13 family. GlgB subfamily. In terms of assembly, monomer.

It catalyses the reaction Transfers a segment of a (1-&gt;4)-alpha-D-glucan chain to a primary hydroxy group in a similar glucan chain.. It functions in the pathway glycan biosynthesis; glycogen biosynthesis. Its function is as follows. Catalyzes the formation of the alpha-1,6-glucosidic linkages in glycogen by scission of a 1,4-alpha-linked oligosaccharide from growing alpha-1,4-glucan chains and the subsequent attachment of the oligosaccharide to the alpha-1,6 position. In Rhizobium etli (strain ATCC 51251 / DSM 11541 / JCM 21823 / NBRC 15573 / CFN 42), this protein is 1,4-alpha-glucan branching enzyme GlgB 2.